A 193-amino-acid polypeptide reads, in one-letter code: Molybdopterin synthase catalytic subunit (193 aa).

Substrate-binding positions include 118 to 119 (HR), lysine 134, and 141 to 143 (KKE). Residues 159–193 (DRTTTDGTTASSPAPATRPAKGGGCCGRKVRVNES) are disordered. The span at 163-178 (TDGTTASSPAPATRPA) shows a compositional bias: low complexity.

The protein belongs to the MoaE family. MOCS2B subfamily. As to quaternary structure, heterotetramer; composed of 2 small (MOCS2A) and 2 large (MOCS2B) subunits.

Its subcellular location is the cytoplasm. The catalysed reaction is 2 [molybdopterin-synthase sulfur-carrier protein]-C-terminal-Gly-aminoethanethioate + cyclic pyranopterin phosphate + H2O = molybdopterin + 2 [molybdopterin-synthase sulfur-carrier protein]-C-terminal Gly-Gly + 2 H(+). Its pathway is cofactor biosynthesis; molybdopterin biosynthesis. Functionally, catalytic subunit of the molybdopterin synthase complex, a complex that catalyzes the conversion of precursor Z into molybdopterin. Acts by mediating the incorporation of 2 sulfur atoms from thiocarboxylated MOCS2A into precursor Z to generate a dithiolene group. This is Molybdopterin synthase catalytic subunit from Oryza sativa subsp. japonica (Rice).